The primary structure comprises 524 residues: Histidine ammonia-lyase (524 aa).

Residues 139–141 (ASG) constitute a cross-link (5-imidazolinone (Ala-Gly)). At S140 the chain carries 2,3-didehydroalanine (Ser). Residues 500 to 524 (ADTQAPAPAKLPDSGDEDRDTTSRH) are disordered.

The protein belongs to the PAL/histidase family. In terms of processing, contains an active site 4-methylidene-imidazol-5-one (MIO), which is formed autocatalytically by cyclization and dehydration of residues Ala-Ser-Gly.

The protein localises to the cytoplasm. The catalysed reaction is L-histidine = trans-urocanate + NH4(+). It participates in amino-acid degradation; L-histidine degradation into L-glutamate; N-formimidoyl-L-glutamate from L-histidine: step 1/3. The chain is Histidine ammonia-lyase (hutH) from Deinococcus radiodurans (strain ATCC 13939 / DSM 20539 / JCM 16871 / CCUG 27074 / LMG 4051 / NBRC 15346 / NCIMB 9279 / VKM B-1422 / R1).